A 440-amino-acid polypeptide reads, in one-letter code: Gamma-aminobutyric acid receptor subunit pi (440 aa).

The N-terminal stretch at 1–23 (MKRSLHLTFVCLSLFSARMCVQG) is a signal peptide. The Extracellular segment spans residues 24–241 (NQFNIEVSRS…LVLQFELQRN (218 aa)). N-linked (GlcNAc...) asparagine glycans are attached at residues asparagine 43, asparagine 102, and asparagine 145. Cysteines 160 and 174 form a disulfide. 2 N-linked (GlcNAc...) asparagine glycosylation sites follow: asparagine 196 and asparagine 228. A helical membrane pass occupies residues 242 to 262 (VLYFILETYVPSTFLVVLSWV). Residues 263-270 (SFWISLDS) lie on the Cytoplasmic side of the membrane. A helical transmembrane segment spans residues 271–290 (VPARTCIGVTTVLSMTTLMI). The Extracellular segment spans residues 291-301 (GSRTSLPNTNC). Residues 302–322 (FIKAIDVYLGICFSFVFGALL) traverse the membrane as a helical segment. The Cytoplasmic segment spans residues 323-419 (EYAVAHYSSL…NPSNVDRYSK (97 aa)). Residues 420-440 (LLFPLIFMLANVFYWAYYMYF) form a helical membrane-spanning segment.

The protein belongs to the ligand-gated ion channel (TC 1.A.9) family. Gamma-aminobutyric acid receptor (TC 1.A.9.5) subfamily. GABRP sub-subfamily. Heteropentamer, formed by a combination of alpha (GABRA1-6), beta (GABRB1-3), gamma (GABRG1-3), delta (GABRD), epsilon (GABRE), rho (GABRR1-3), pi (GABRP) and theta (GABRQ) chains, each subunit exhibiting distinct physiological and pharmacological properties.

It is found in the cell membrane. Its subcellular location is the apical cell membrane. It carries out the reaction chloride(in) = chloride(out). Pi subunit of the heteropentameric ligand-gated chloride channel gated by gamma-aminobutyric acid (GABA). GABA-gated chloride channels, also named GABA(A) receptors (GABAAR), consist of five subunits arranged around a central pore and contain GABA active binding site(s) located at the alpha and beta subunit interfaces. When activated by GABA, GABAARs selectively allow the flow of chloride anions across the cell membrane down their electrochemical gradient. Pi-containing GABAARs are mostly located in peripheral tissues. In the uterus, pi subunits modulate uterus contraction by altering the sensitivity of GABAARs to pregnanolone. In the lungs, pi-containing GABAARs contribute to pulmonary fluid transport via luminal secretion of chloride. The polypeptide is Gamma-aminobutyric acid receptor subunit pi (GABRP) (Bos taurus (Bovine)).